A 320-amino-acid polypeptide reads, in one-letter code: Nucleotide-binding protein Acid_7395 (320 aa).

Residues 1–34 (MPLRKKGAATTKAAATRKDSAKAPASSKRKDAPQ) are disordered. 44–51 (GLSGSGKG) provides a ligand contact to ATP. 94–97 (DIRE) contributes to the GTP binding site.

Belongs to the RapZ-like family.

Its function is as follows. Displays ATPase and GTPase activities. This is Nucleotide-binding protein Acid_7395 from Solibacter usitatus (strain Ellin6076).